Consider the following 91-residue polypeptide: Putative ribonuclease inhibitor YrdF (91 aa).

This sequence belongs to the barstar family.

The protein resides in the cytoplasm. The polypeptide is Putative ribonuclease inhibitor YrdF (yrdF) (Bacillus subtilis (strain 168)).